The primary structure comprises 250 residues: MLLIAGLGNPGPQYAHNRHNIGFMAADEIFRRHRFSNWQKKFQAEIADGVIDGEKVLLVKPQTFMNLSGQSIGEAMRFYKLTPADLVVIYDELDLVPGKLRIKTGGGSGGHNGIKSIDAHMQSFPGGQNYRRMRLGIGHPGAKELVHNYVLGDFAKADNEWLDTLMGAVADNVAMLARREDNSFMNRIALAMGDGNQRPGGVKTDPAQLEKAPPKAQSHIRQARQNQKKPNIPESGPMAEMLKKLLGKKD.

A tRNA-binding site is contributed by Tyr-14. His-19 acts as the Proton acceptor in catalysis. Residues Phe-64, Asn-66, and Asn-112 each coordinate tRNA. The interval Met-192 to Asp-250 is disordered. The segment covering His-219–Lys-229 has biased composition (polar residues). Over residues Met-241–Asp-250 the composition is skewed to basic and acidic residues.

The protein belongs to the PTH family. Monomer.

The protein localises to the cytoplasm. The catalysed reaction is an N-acyl-L-alpha-aminoacyl-tRNA + H2O = an N-acyl-L-amino acid + a tRNA + H(+). In terms of biological role, hydrolyzes ribosome-free peptidyl-tRNAs (with 1 or more amino acids incorporated), which drop off the ribosome during protein synthesis, or as a result of ribosome stalling. Its function is as follows. Catalyzes the release of premature peptidyl moieties from peptidyl-tRNA molecules trapped in stalled 50S ribosomal subunits, and thus maintains levels of free tRNAs and 50S ribosomes. The chain is Peptidyl-tRNA hydrolase from Brucella canis (strain ATCC 23365 / NCTC 10854 / RM-666).